An 84-amino-acid chain; its full sequence is Exodeoxyribonuclease 7 small subunit (84 aa).

Belongs to the XseB family. As to quaternary structure, heterooligomer composed of large and small subunits.

It is found in the cytoplasm. The enzyme catalyses Exonucleolytic cleavage in either 5'- to 3'- or 3'- to 5'-direction to yield nucleoside 5'-phosphates.. Its function is as follows. Bidirectionally degrades single-stranded DNA into large acid-insoluble oligonucleotides, which are then degraded further into small acid-soluble oligonucleotides. The chain is Exodeoxyribonuclease 7 small subunit from Bartonella henselae (strain ATCC 49882 / DSM 28221 / CCUG 30454 / Houston 1) (Rochalimaea henselae).